The primary structure comprises 501 residues: UPF0288 protein Maeo_0995 (501 aa).

It belongs to the UPF0288 family.

The polypeptide is UPF0288 protein Maeo_0995 (Methanococcus aeolicus (strain ATCC BAA-1280 / DSM 17508 / OCM 812 / Nankai-3)).